The primary structure comprises 383 residues: Acetylornithine deacetylase (383 aa).

His-80 provides a ligand contact to Zn(2+). Asp-82 is a catalytic residue. Residue Asp-112 participates in Zn(2+) binding. The active site involves Glu-144. Zn(2+) contacts are provided by Glu-145, Glu-169, and His-355.

It belongs to the peptidase M20A family. ArgE subfamily. Homodimer. The cofactor is Zn(2+). Co(2+) serves as cofactor. It depends on glutathione as a cofactor.

The protein resides in the cytoplasm. The enzyme catalyses N(2)-acetyl-L-ornithine + H2O = L-ornithine + acetate. It participates in amino-acid biosynthesis; L-arginine biosynthesis; L-ornithine from N(2)-acetyl-L-ornithine (linear): step 1/1. Its function is as follows. Catalyzes the hydrolysis of the amide bond of N(2)-acetylated L-amino acids. Cleaves the acetyl group from N-acetyl-L-ornithine to form L-ornithine, an intermediate in L-arginine biosynthesis pathway, and a branchpoint in the synthesis of polyamines. In Escherichia coli O45:K1 (strain S88 / ExPEC), this protein is Acetylornithine deacetylase.